The sequence spans 758 residues: Photosystem I P700 chlorophyll a apoprotein A1 (758 aa).

A run of 8 helical transmembrane segments spans residues 78 to 101 (VFSA…FHGA), 164 to 187 (LYCT…FHYH), 203 to 227 (LNHH…HVSL), 299 to 317 (IAHH…GHMY), 354 to 377 (WHAQ…QHMY), 393 to 419 (LSLF…IFMV), 441 to 463 (AIIS…LYIH), and 539 to 557 (FLVH…LILL). Positions 581 and 590 each coordinate [4Fe-4S] cluster. 2 helical membrane-spanning segments follow: residues 597-618 (HVFL…HFSW) and 672-694 (LSAY…MFLF). His683 provides a ligand contact to chlorophyll a'. The chlorophyll a site is built by Met691 and Tyr699. Trp700 contacts phylloquinone. Residues 732 to 753 (AVGVTHYLLGGIATTWAFFLAR) traverse the membrane as a helical segment.

Belongs to the PsaA/PsaB family. As to quaternary structure, the PsaA/B heterodimer binds the P700 chlorophyll special pair and subsequent electron acceptors. PSI consists of a core antenna complex that captures photons, and an electron transfer chain that converts photonic excitation into a charge separation. The eukaryotic PSI reaction center is composed of at least 11 subunits. It depends on P700 is a chlorophyll a/chlorophyll a' dimer, A0 is one or more chlorophyll a, A1 is one or both phylloquinones and FX is a shared 4Fe-4S iron-sulfur center. as a cofactor.

The protein localises to the plastid. It is found in the chloroplast thylakoid membrane. It catalyses the reaction reduced [plastocyanin] + hnu + oxidized [2Fe-2S]-[ferredoxin] = oxidized [plastocyanin] + reduced [2Fe-2S]-[ferredoxin]. Functionally, psaA and PsaB bind P700, the primary electron donor of photosystem I (PSI), as well as the electron acceptors A0, A1 and FX. PSI is a plastocyanin-ferredoxin oxidoreductase, converting photonic excitation into a charge separation, which transfers an electron from the donor P700 chlorophyll pair to the spectroscopically characterized acceptors A0, A1, FX, FA and FB in turn. Oxidized P700 is reduced on the lumenal side of the thylakoid membrane by plastocyanin. The sequence is that of Photosystem I P700 chlorophyll a apoprotein A1 from Pisum sativum (Garden pea).